A 362-amino-acid chain; its full sequence is N-acylethanolamine-hydrolyzing acid amidase (362 aa).

A signal peptide spans 1–33 (MGTPAIRAACHGAHLALALLLLLSLSDPWLWAT). Asn42 and Asn112 each carry an N-linked (GlcNAc...) asparagine glycan. The active-site Nucleophile is the Cys131. Residues Asn314 and Asn338 are each glycosylated (N-linked (GlcNAc...) asparagine).

Belongs to the acid ceramidase family. Heterodimer of an alpha and a beta subunit, produced by autocatalytic cleavage. N-glycosylated. Tunicamycin treatment causes a reduction in specific activity against N-palmitoylethanolamine. In terms of processing, autoproteolytic cleavage at pH 4.5 gives rise to the alpha and beta subunit. Cleavage gives rise to a conformation change that activates the enzyme. The same catalytic Cys residue mediates the autoproteolytic cleavage and subsequent hydrolysis of lipid substrates. As to expression, expressed in brain, cecum, colon, heart, ileum, kidney, liver, lung, spleen, stomach, submaxillary gland, testis and thymus.

The protein resides in the lysosome. It is found in the membrane. The catalysed reaction is N-hexadecanoylethanolamine + H2O = ethanolamine + hexadecanoate. It catalyses the reaction an N-(long-chain fatty acyl)ethanolamine + H2O = a long-chain fatty acid + ethanolamine. It carries out the reaction N-dodecanoylethanolamine + H2O = dodecanoate + ethanolamine. The enzyme catalyses N-tetradecanoylethanolamine + H2O = tetradecanoate + ethanolamine. The catalysed reaction is an N-acylsphing-4-enine + H2O = sphing-4-enine + a fatty acid. It catalyses the reaction N-hexadecanoylsphing-4-enine + H2O = sphing-4-enine + hexadecanoate. It carries out the reaction N-dodecanoylsphing-4-enine + H2O = dodecanoate + sphing-4-enine. It participates in lipid metabolism; fatty acid metabolism. Stimulated by DTT. Stimulated by nonionic detergent of the polyoxyethylenep-t-octylphenylether type (Triton X-100 or Nonidet P-40) whereas 3-[(3-cholamidopropyl)dimethylammonio]propane-1-sulfonate (CHAPS) and octyl alpha-D-glucopyranoside decrease the N-(long-chain-acyl)ethanolamine deacylase activity. Polysorbate 20 (Tween 20) is inhibitory. Stimulated by endogenous phospholipids such as choline- or ethanolamine-containing phospholipids, and dihydrolipoic acid. Functionally, degrades bioactive fatty acid amides to their corresponding acids, with the following preference: N-palmitoylethanolamine &gt; N-myristoylethanolamine &gt; N-stearoylethanolamine &gt; N-oleoylethanolamine &gt; N-linoleoylethanolamine &gt; N-arachidonoylethanolamine. The sequence is that of N-acylethanolamine-hydrolyzing acid amidase from Rattus norvegicus (Rat).